The chain runs to 433 residues: Glucoside xylosyltransferase 1 (433 aa).

Residues 1 to 6 (MRRFAR) lie on the Cytoplasmic side of the membrane. The helical; Signal-anchor for type II membrane protein transmembrane segment at 7-29 (VALLFLGCGVCSLLYGVSQLALS) threads the bilayer. The Lumenal portion of the chain corresponds to 30-433 (LEQEAGGARQ…DLSVRRSKGS (404 aa)). A disordered region spans residues 39 to 64 (QRQARESAAPGGGRQAGSADGGEEGA). 5 N-linked (GlcNAc...) asparagine glycosylation sites follow: Asn-69, Asn-166, Asn-271, Asn-305, and Asn-380.

The protein belongs to the glycosyltransferase 8 family.

It is found in the membrane. It carries out the reaction 3-O-(beta-D-glucosyl)-L-seryl-[EGF-like domain protein] + UDP-alpha-D-xylose = 3-O-[alpha-D-xylosyl-(1-&gt;3)-beta-D-glucosyl]-L-seryl-[EGF-like domain protein] + UDP + H(+). In terms of biological role, glycosyltransferase which elongates the O-linked glucose attached to EGF-like repeats in the extracellular domain of Notch proteins by catalyzing the addition of xylose. In Gallus gallus (Chicken), this protein is Glucoside xylosyltransferase 1 (GXYLT1).